The primary structure comprises 172 residues: uncharacterized protein (172 aa).

The disordered stretch occupies residues 130–154 (EQEKGAAPQEGKDWQVISEEDKKNQ).

This is an uncharacterized protein from Bacillus subtilis (strain 168).